The primary structure comprises 383 residues: 8-amino-7-oxononanoate synthase (383 aa).

R27 and R34 together coordinate substrate. 114–115 (GY) provides a ligand contact to pyridoxal 5'-phosphate. Residue H139 participates in substrate binding. Residues S187, 212-215 (DDAH), and 232-235 (TLSK) contribute to the pyridoxal 5'-phosphate site. K235 carries the N6-(pyridoxal phosphate)lysine modification. Residue T344 coordinates substrate.

This sequence belongs to the class-II pyridoxal-phosphate-dependent aminotransferase family. BioF subfamily. As to quaternary structure, homodimer. Pyridoxal 5'-phosphate is required as a cofactor.

It catalyses the reaction 6-carboxyhexanoyl-[ACP] + L-alanine + H(+) = (8S)-8-amino-7-oxononanoate + holo-[ACP] + CO2. Its pathway is cofactor biosynthesis; biotin biosynthesis. Functionally, catalyzes the decarboxylative condensation of pimeloyl-[acyl-carrier protein] and L-alanine to produce 8-amino-7-oxononanoate (AON), [acyl-carrier protein], and carbon dioxide. The protein is 8-amino-7-oxononanoate synthase of Methylorubrum extorquens (strain PA1) (Methylobacterium extorquens).